Consider the following 431-residue polypeptide: Histidinol dehydrogenase 1 (431 aa).

The NAD(+) site is built by tyrosine 127, glutamine 188, and asparagine 211. Substrate-binding residues include serine 234, glutamine 256, and histidine 259. The Zn(2+) site is built by glutamine 256 and histidine 259. Active-site proton acceptor residues include glutamate 324 and histidine 325. Substrate-binding residues include histidine 325, aspartate 358, glutamate 412, and histidine 417. Aspartate 358 serves as a coordination point for Zn(2+). Histidine 417 provides a ligand contact to Zn(2+).

Belongs to the histidinol dehydrogenase family. Zn(2+) serves as cofactor.

The enzyme catalyses L-histidinol + 2 NAD(+) + H2O = L-histidine + 2 NADH + 3 H(+). Its pathway is amino-acid biosynthesis; L-histidine biosynthesis; L-histidine from 5-phospho-alpha-D-ribose 1-diphosphate: step 9/9. Catalyzes the sequential NAD-dependent oxidations of L-histidinol to L-histidinaldehyde and then to L-histidine. The sequence is that of Histidinol dehydrogenase 1 (hisD1) from Nostoc sp. (strain PCC 7120 / SAG 25.82 / UTEX 2576).